Here is a 360-residue protein sequence, read N- to C-terminus: uncharacterized protein (360 aa).

6 consecutive transmembrane segments (helical) span residues 12–32 (ILPL…ITQI), 52–72 (VVLV…VIAV), 96–116 (IQLA…AYYI), 278–298 (IIWP…FLRY), 306–326 (FMPV…HFIL), and 336–356 (FIFA…YLLV).

The protein localises to the cell membrane. This is an uncharacterized protein from Rickettsia prowazekii (strain Madrid E).